Reading from the N-terminus, the 110-residue chain is Putative caspase recruitment domain-containing protein 17P (110 aa).

Residues 1-91 (MADKVLKEKR…HLAGTLGLSA (91 aa)) form the CARD domain.

As to quaternary structure, interacts with pro-CASP1. As to expression, ubiquitous.

It is found in the cytoplasm. Regulator of procaspase-1/CASP1 activation implicated in the regulation of the proteolytic maturation of pro-IL-1beta/IL1B and its release during inflammation. Inhibits the release of IL1B in response to LPS in monocytes. However, unlike CASP1, do not induce NF-kappa-B activation. The protein is Putative caspase recruitment domain-containing protein 17P (CARD17P) of Homo sapiens (Human).